The primary structure comprises 797 residues: Peroxisome proliferator-activated receptor gamma coactivator 1-alpha (797 aa).

K77 is modified (N6-acetyllysine). The interval 101 to 138 is disordered; it reads EDGLPSFDALTDGAVTTDNEASPSSMPDGTPPPQEAEE. A compositionally biased stretch (polar residues) spans 114-127; it reads AVTTDNEASPSSMP. The LXXLL motif signature appears at 142–146; sequence LKKLL. K144 carries the post-translational modification N6-acetyllysine. T177 is subject to Phosphothreonine; by AMPK. K183 bears the N6-acetyllysine mark. Residues 212–276 are disordered; sequence YLTTNDDPPH…NDPKGSPFEN (65 aa). Basic and acidic residues predominate over residues 218 to 236; sequence DPPHTKPTENRNSSRDKCA. Positions 243–259 are enriched in polar residues; that stretch reads TQPQSQHAQAKPTTLSL. N6-acetyllysine occurs at positions 253, 270, 277, 320, 346, 412, 441, and 450. Residues 289-376 form a disordered region; it reads GTAGLTPPTT…HEERKTKRPS (88 aa). The interval 292–338 is interaction with PPARG; the sequence is GLTPPTTPPHKANQDNPFKASPKLKPSCKTVVPPPTKRARYSECSGT. The tract at residues 349–797 is mediates interaction with RNF34; the sequence is EQSELYAQLS…LKEAQRSLRR (449 aa). S538 carries the post-translational modification Phosphoserine; by AMPK. 3 disordered regions span residues 543-598, 612-634, and 648-668; these read NSPC…SSRS, HRNS…PRYD, and EYRK…ERQK. A compositionally biased stretch (basic residues) spans 562 to 577; sequence QRMRSRSRSFSRHRSC. Residues 578 to 598 are compositionally biased toward low complexity; that stretch reads SRSPYSRSRSRSPGSRSSSRS. Basic residues predominate over residues 621-630; that stretch reads SRSRSPYSRR. An RRM domain is found at 676 to 752; the sequence is RVIYVGKIRP…TDFELYFCGR (77 aa). N6-acetyllysine is present on residues K757 and K778.

Homooligomer. Interacts with MYBBP1A; inhibits MYBBP1A transcriptional activation. Interacts with PRDM16, LPIN1 and PML. Interacts (via LXXLL motif) with RORA and RORC (via AF-2 motif); activates RORA and RORC transcriptional activation. Interacts with LRPPRC. Interacts with FOXO1. Interacts with NR5A2. Phosphorylation by AMPK in skeletal muscle increases activation of its own promoter. Phosphorylated by CLK2. In terms of processing, heavily acetylated by KAT2A/GCN5 under conditions of high nutrients, leading to inactivation of PPARGC1A. Deacetylated by SIRT1 in low nutrients/high NAD conditions, leading to its activation. Post-translationally, ubiquitinated. Ubiquitination by RNF34 induces proteasomal degradation. White quadriceps and red tibialis anterior (TA) muscles, liver, kidney and brown adipose tissue (at protein level). Skeletal muscle, brown adipose tissue, heart, kidney and brain.

It is found in the nucleus. The protein localises to the PML body. Transcriptional coactivator for steroid receptors and nuclear receptors. Greatly increases the transcriptional activity of PPARG and thyroid hormone receptor on the uncoupling protein promoter. Can regulate key mitochondrial genes that contribute to the program of adaptive thermogenesis. Plays an essential role in metabolic reprogramming in response to dietary availability through coordination of the expression of a wide array of genes involved in glucose and fatty acid metabolism. Acts as a key regulator of gluconeogenesis: stimulates hepatic gluconeogenesis by increasing the expression of gluconeogenic enzymes, and acting together with FOXO1 to promote the fasting gluconeogenic program. Induces the expression of PERM1 in the skeletal muscle in an ESRRA-dependent manner. Also involved in the integration of the circadian rhythms and energy metabolism. Required for oscillatory expression of clock genes, such as BMAL1 and NR1D1, through the coactivation of RORA and RORC, and metabolic genes, such as PDK4 and PEPCK. The protein is Peroxisome proliferator-activated receptor gamma coactivator 1-alpha (Ppargc1a) of Mus musculus (Mouse).